The following is a 549-amino-acid chain: Glucose-6-phosphate isomerase (549 aa).

Glu355 acts as the Proton donor in catalysis. Active-site residues include His386 and Lys514.

It belongs to the GPI family.

It localises to the cytoplasm. The enzyme catalyses alpha-D-glucose 6-phosphate = beta-D-fructose 6-phosphate. It participates in carbohydrate biosynthesis; gluconeogenesis. It functions in the pathway carbohydrate degradation; glycolysis; D-glyceraldehyde 3-phosphate and glycerone phosphate from D-glucose: step 2/4. Catalyzes the reversible isomerization of glucose-6-phosphate to fructose-6-phosphate. The sequence is that of Glucose-6-phosphate isomerase from Buchnera aphidicola subsp. Acyrthosiphon pisum (strain APS) (Acyrthosiphon pisum symbiotic bacterium).